A 153-amino-acid chain; its full sequence is Transcriptional repressor NrdR (153 aa).

Residues 3–34 fold into a zinc finger; that stretch reads CPSCQHHGTRVLDSRPVDEGRSIRRRRECEQC. Residues 49–139 enclose the ATP-cone domain; it reads LIVVKKQGMR…VYRQFKDLNV (91 aa).

The protein belongs to the NrdR family. It depends on Zn(2+) as a cofactor.

In terms of biological role, negatively regulates transcription of bacterial ribonucleotide reductase nrd genes and operons by binding to NrdR-boxes. This Geobacillus sp. (strain WCH70) protein is Transcriptional repressor NrdR.